The primary structure comprises 378 residues: Chaperone protein DnaJ (378 aa).

Positions D5–G70 constitute a J domain. The CR-type zinc-finger motif lies at G134 to T212. Zn(2+) is bound by residues C147, C150, C164, C167, C186, C189, C200, and C203. CXXCXGXG motif repeat units lie at residues C147–G154, C164–G171, C186–G193, and C200–G207.

It belongs to the DnaJ family. Homodimer. The cofactor is Zn(2+).

The protein localises to the cytoplasm. Functionally, participates actively in the response to hyperosmotic and heat shock by preventing the aggregation of stress-denatured proteins and by disaggregating proteins, also in an autonomous, DnaK-independent fashion. Unfolded proteins bind initially to DnaJ; upon interaction with the DnaJ-bound protein, DnaK hydrolyzes its bound ATP, resulting in the formation of a stable complex. GrpE releases ADP from DnaK; ATP binding to DnaK triggers the release of the substrate protein, thus completing the reaction cycle. Several rounds of ATP-dependent interactions between DnaJ, DnaK and GrpE are required for fully efficient folding. Also involved, together with DnaK and GrpE, in the DNA replication of plasmids through activation of initiation proteins. This chain is Chaperone protein DnaJ, found in Shewanella oneidensis (strain ATCC 700550 / JCM 31522 / CIP 106686 / LMG 19005 / NCIMB 14063 / MR-1).